The sequence spans 67 residues: Protein AaeX (67 aa).

A run of 2 helical transmembrane segments spans residues 3 to 23 (LFPV…ELLL) and 43 to 63 (FVWH…YLLS).

Belongs to the AaeX family.

The protein localises to the cell membrane. In Cronobacter sakazakii (strain ATCC BAA-894) (Enterobacter sakazakii), this protein is Protein AaeX.